Reading from the N-terminus, the 265-residue chain is Probable autolysin SsaALP (265 aa).

Residues 1–25 form the signal peptide; the sequence is MKKLAFAITATSGAAAFLTHHDAQA. 2 consecutive LysM domains span residues 27–70 and 89–132; these read TQHT…VISV and SSHT…TLQI. The segment at 72–92 is disordered; sequence GSDAQNTSNTSPQAGSASSHT. Residues 74–92 are compositionally biased toward polar residues; sequence DAQNTSNTSPQAGSASSHT. The Peptidase C51 domain maps to 141-265; that stretch reads TPTATTGSNG…SEVSSYAFIH (125 aa).

The enzyme catalyses Hydrolyzes the link between N-acetylmuramoyl residues and L-amino acid residues in certain cell-wall glycopeptides.. Functionally, has weak lytic activity toward S.aureus cells. The polypeptide is Probable autolysin SsaALP (Staphylococcus aureus (strain NCTC 8325 / PS 47)).